The primary structure comprises 345 residues: Holliday junction branch migration complex subunit RuvB (345 aa).

The interval 1 to 183 (MTTQRLVSAA…FGIVHRLEFY (183 aa)) is large ATPase domain (RuvB-L). ATP-binding positions include Ile22, Arg23, Gly64, Lys67, Thr68, Thr69, 130-132 (EDY), Arg173, Tyr183, and Arg220. Thr68 is a Mg(2+) binding site. A small ATPAse domain (RuvB-S) region spans residues 184-254 (SVEELSRIVA…VAGKALEMLD (71 aa)). The segment at 257 to 345 (PNGFDQSDRR…NVNEELFGDE (89 aa)) is head domain (RuvB-H). 3 residues coordinate DNA: Arg293, Arg312, and Arg317.

The protein belongs to the RuvB family. In terms of assembly, homohexamer. Forms an RuvA(8)-RuvB(12)-Holliday junction (HJ) complex. HJ DNA is sandwiched between 2 RuvA tetramers; dsDNA enters through RuvA and exits via RuvB. An RuvB hexamer assembles on each DNA strand where it exits the tetramer. Each RuvB hexamer is contacted by two RuvA subunits (via domain III) on 2 adjacent RuvB subunits; this complex drives branch migration. In the full resolvosome a probable DNA-RuvA(4)-RuvB(12)-RuvC(2) complex forms which resolves the HJ.

Its subcellular location is the cytoplasm. The catalysed reaction is ATP + H2O = ADP + phosphate + H(+). In terms of biological role, the RuvA-RuvB-RuvC complex processes Holliday junction (HJ) DNA during genetic recombination and DNA repair, while the RuvA-RuvB complex plays an important role in the rescue of blocked DNA replication forks via replication fork reversal (RFR). RuvA specifically binds to HJ cruciform DNA, conferring on it an open structure. The RuvB hexamer acts as an ATP-dependent pump, pulling dsDNA into and through the RuvAB complex. RuvB forms 2 homohexamers on either side of HJ DNA bound by 1 or 2 RuvA tetramers; 4 subunits per hexamer contact DNA at a time. Coordinated motions by a converter formed by DNA-disengaged RuvB subunits stimulates ATP hydrolysis and nucleotide exchange. Immobilization of the converter enables RuvB to convert the ATP-contained energy into a lever motion, pulling 2 nucleotides of DNA out of the RuvA tetramer per ATP hydrolyzed, thus driving DNA branch migration. The RuvB motors rotate together with the DNA substrate, which together with the progressing nucleotide cycle form the mechanistic basis for DNA recombination by continuous HJ branch migration. Branch migration allows RuvC to scan DNA until it finds its consensus sequence, where it cleaves and resolves cruciform DNA. The sequence is that of Holliday junction branch migration complex subunit RuvB from Methylococcus capsulatus (strain ATCC 33009 / NCIMB 11132 / Bath).